A 502-amino-acid polypeptide reads, in one-letter code: Probable malate:quinone oxidoreductase (502 aa).

It belongs to the MQO family. Requires FAD as cofactor.

The enzyme catalyses (S)-malate + a quinone = a quinol + oxaloacetate. Its pathway is carbohydrate metabolism; tricarboxylic acid cycle; oxaloacetate from (S)-malate (quinone route): step 1/1. The protein is Probable malate:quinone oxidoreductase of Parasynechococcus marenigrum (strain WH8102).